We begin with the raw amino-acid sequence, 160 residues long: E3 ubiquitin ligase complex SCF subunit sconC (160 aa).

Residues 101–160 are interaction with the F-box domain of F-box proteins; that stretch reads ILAANYLDIKALLDVGCKTVANMIKGKSPEEIRKTFNIQNDFTPEEEDQIRRENEWAEDR.

The protein belongs to the SKP1 family. As to quaternary structure, component of the SCF (SKP1-CUL1-F-box protein) E3 ubiquitin ligase complexes.

Its pathway is protein modification; protein ubiquitination. In terms of biological role, essential component of the SCF (SKP1-CUL1-F-box protein) E3 ubiquitin ligase complexes, which mediate the ubiquitination and subsequent proteasomal degradation of target proteins. Controls sulfur metabolite repression, probably by mediating the inactivation or degradation of the metR transcription factor. This chain is E3 ubiquitin ligase complex SCF subunit sconC (sconC), found in Talaromyces marneffei (strain ATCC 18224 / CBS 334.59 / QM 7333) (Penicillium marneffei).